The primary structure comprises 500 residues: Proline/betaine transporter (500 aa).

The Cytoplasmic portion of the chain corresponds to M1–E37. A helical transmembrane segment spans residues W38–G58. Residues A59–M65 lie on the Periplasmic side of the membrane. The chain crosses the membrane as a helical span at residues I66 to F86. Topologically, residues G87 to K97 are cytoplasmic. Residues I98–S118 form a helical membrane-spanning segment. Residues Y119 to T121 are Periplasmic-facing. The helical transmembrane segment at I122 to G142 threads the bilayer. Topologically, residues G143 to D169 are cytoplasmic. The helical transmembrane segment at F170–V190 threads the bilayer. Topologically, residues G191–N194 are periplasmic. Residues F195–L215 traverse the membrane as a helical segment. The Cytoplasmic segment spans residues Y216–S260. The chain crosses the membrane as a helical span at residues L261–Y281. Residues M282–G297 lie on the Periplasmic side of the membrane. A helical membrane pass occupies residues V298–L318. Topologically, residues S319 to R325 are cytoplasmic. The helical transmembrane segment at P326–I346 threads the bilayer. The Periplasmic portion of the chain corresponds to N347–V350. Residues I351–V371 form a helical membrane-spanning segment. The Cytoplasmic portion of the chain corresponds to M372–A390. A helical membrane pass occupies residues A391 to V411. Residues E412–D416 lie on the Periplasmic side of the membrane. Residues L417–S437 form a helical membrane-spanning segment. Residues M438–E500 are Cytoplasmic-facing. Residues A453–I498 adopt a coiled-coil conformation.

It belongs to the major facilitator superfamily. Metabolite:H+ Symporter (MHS) family (TC 2.A.1.6) family.

It localises to the cell inner membrane. Its function is as follows. Proton symporter that senses osmotic shifts and responds by importing osmolytes such as proline, glycine betaine, stachydrine, pipecolic acid, ectoine and taurine. It is both an osmosensor and an osmoregulator which is available to participate early in the bacterial osmoregulatory response. This Salmonella typhimurium (strain LT2 / SGSC1412 / ATCC 700720) protein is Proline/betaine transporter (proP).